The primary structure comprises 437 residues: Branched-chain amino acid transport system 3 carrier protein (437 aa).

The next 12 membrane-spanning stretches (helical) occupy residues 9–29 (ILAL…IIFP), 40–60 (VWLA…ITVI), 79–99 (YAGG…FAIP), 120–140 (ALFV…LYPG), 155–175 (ILAL…PIGT), 189–209 (FVNG…IVIV), 226–246 (YAIV…VSLF), 277–297 (LGSS…AVGL), 316–336 (LVII…TKLI), 342–362 (VLTA…CIGL), 369–389 (ILAP…LKAA), and 399–419 (LLHL…VATL).

The protein belongs to the branched chain amino acid transporter family.

It localises to the cell inner membrane. Component of the LIV-III transport system for branched-chain amino acids. BraZ is specific for isoleucine and valine. The LIV-III transport system may be H(+)-coupled. The chain is Branched-chain amino acid transport system 3 carrier protein (braZ) from Pseudomonas aeruginosa (strain ATCC 15692 / DSM 22644 / CIP 104116 / JCM 14847 / LMG 12228 / 1C / PRS 101 / PAO1).